Here is a 399-residue protein sequence, read N- to C-terminus: S-adenosylmethionine synthase (399 aa).

H17 lines the ATP pocket. Position 19 (D19) interacts with Mg(2+). E45 is a K(+) binding site. L-methionine contacts are provided by E58 and Q101. Positions 101-111 (QSADIAMGVDQ) are flexible loop. Residues 177-179 (DGK), 244-245 (RF), D253, 259-260 (RK), A276, and K280 each bind ATP. Residue D253 coordinates L-methionine. L-methionine is bound at residue K284.

It belongs to the AdoMet synthase family. Homotetramer; dimer of dimers. Requires Mg(2+) as cofactor. K(+) serves as cofactor.

Its subcellular location is the cytoplasm. The enzyme catalyses L-methionine + ATP + H2O = S-adenosyl-L-methionine + phosphate + diphosphate. It functions in the pathway amino-acid biosynthesis; S-adenosyl-L-methionine biosynthesis; S-adenosyl-L-methionine from L-methionine: step 1/1. Catalyzes the formation of S-adenosylmethionine (AdoMet) from methionine and ATP. The overall synthetic reaction is composed of two sequential steps, AdoMet formation and the subsequent tripolyphosphate hydrolysis which occurs prior to release of AdoMet from the enzyme. The chain is S-adenosylmethionine synthase from Bacillus cereus (strain ATCC 10987 / NRS 248).